The following is a 548-amino-acid chain: Chaperonin GroEL 2 (548 aa).

ATP contacts are provided by residues 30–33 (TLGP), Lys51, 87–91 (DGTTT), Gly415, 479–481 (NAA), and Asp495. Residues 524–548 (APKDAPPTAPAGVPGAGAGGPGFDF) are disordered. Over residues 537–548 (PGAGAGGPGFDF) the composition is skewed to gly residues.

It belongs to the chaperonin (HSP60) family. Forms a cylinder of 14 subunits composed of two heptameric rings stacked back-to-back. Interacts with the co-chaperonin GroES.

Its subcellular location is the cytoplasm. The catalysed reaction is ATP + H2O + a folded polypeptide = ADP + phosphate + an unfolded polypeptide.. In terms of biological role, together with its co-chaperonin GroES, plays an essential role in assisting protein folding. The GroEL-GroES system forms a nano-cage that allows encapsulation of the non-native substrate proteins and provides a physical environment optimized to promote and accelerate protein folding. The chain is Chaperonin GroEL 2 from Burkholderia pseudomallei (strain 668).